The sequence spans 581 residues: MENLGFLIISTFLLLFTTLLPYSSASTTRRFHFNVEWKKVTRLCHTKQLLTVNGQYPGPTVAVHEGDIVEIKVTNRIAHNTTIHWHGLRQYRTGWADGPAYITQCPIRSKQSYTYRFKVEDQRGTLLWHAHHSWQRASVYGAFIIYPRQPYPFSGSHIQSEIPIILGEWWNDDVDNVEKAMMKTGAGAKVSDAYTLNGLPGPLYPCSTKDTFTATVDAGKTYILRIINAALNNELFVAVANHTLTVVEVDAVYTKPVHTKAIMIAPGQTTTLLLRADQLSGGEFLIAATPYVTSVFPFNNSTTVGFIRYTGKTKPENSVNTRRRRRLTAMSTVVALPNMLDTKFATKFSDSIKSLGSAKYPCKVPTKIDKRVITTISLNLQDCPLNQTCDGYAGKRFFASMNNISFVRPPISILESYYKKQSKGVFSLDFPEKPPNRFDFTGVDPVSENMNTEFGTKLFEVEFGSRLEIVFQGTSFLNIENHPLHVHGHNFFVVGRGFGNFDPEKDPKRYNLVDPPERNTFAVPTGGWAAIRINADNPGVWFIHCHLEQHTSWGLAMGFIVKDGPLPSQTLLPPPHDLPQC.

A signal peptide spans 1–25 (MENLGFLIISTFLLLFTTLLPYSSA). Plastocyanin-like domains lie at 34-150 (NVEW…PRQP) and 161-312 (EIPI…YTGK). A glycan (N-linked (GlcNAc...) asparagine) is linked at asparagine 80. Residues histidine 84, histidine 86, histidine 129, and histidine 131 each coordinate Cu cation. 4 N-linked (GlcNAc...) asparagine glycosylation sites follow: asparagine 241, asparagine 300, asparagine 386, and asparagine 403. The region spanning 429–565 (DFPEKPPNRF…AMGFIVKDGP (137 aa)) is the Plastocyanin-like 3 domain. Cu cation-binding residues include histidine 482, histidine 485, histidine 487, histidine 544, cysteine 545, histidine 546, and histidine 550.

This sequence belongs to the multicopper oxidase family. The cofactor is Cu cation. As to expression, expressed in roots, stems and flowers.

Its subcellular location is the secreted. It is found in the extracellular space. It localises to the apoplast. It carries out the reaction 4 hydroquinone + O2 = 4 benzosemiquinone + 2 H2O. Its function is as follows. Lignin degradation and detoxification of lignin-derived products. The sequence is that of Laccase-1 (LAC1) from Arabidopsis thaliana (Mouse-ear cress).